The sequence spans 316 residues: Conjugated bile acid hydrolase (316 aa).

Cys-2 acts as the Nucleophile in catalysis. Cys-2 and Arg-18 together coordinate deoxycholate. Taurine is bound at residue Asn-81.

The protein belongs to the peptidase C59 family.

The catalysed reaction is cholate + taurine = taurocholate + H2O. It catalyses the reaction taurodeoxycholate + H2O = deoxycholate + taurine. The enzyme catalyses taurochenodeoxycholate + H2O = chenodeoxycholate + taurine. It carries out the reaction glycocholate + H2O = cholate + glycine. The protein operates within lipid metabolism; bile acid biosynthesis. Its activity is regulated as follows. Glycocholate hydrolysis is inhibited by various previously identified BSH inhibitors, including KIO(3), NaHIO(3), NaIO(4), CuCl(2), menadione, riboflavin, gossypetin, and the antibiotics oxytetracycline, demeclocycline hydrochloride and methacycline hydrochloride. Functionally, bile salt hydrolase that catalyzes the deconjugation of glycine- and taurine-linked bile salts, which occurs naturally in the intestines of animals, releasing amino acid residues and deconjugated bile salts (bile acids). Can hydrolyze the amide bond in the bile salts taurocholate (TCA), taurodeoxycholate (TDCA), taurochenodeoxycholate (TCDCA), taurohyodeoxycholate (THDCA) and tauroursodeoxycholate (TUDCA). Oh et al. did not detect activity with the glycine-conjugated bile salts glycocholate (GCA), glycodeoxycholate (GDCA) and glycochenodeoxycholate (GCDCA). However, a later study shows activity toward glycocholate (GCA). The sequence is that of Conjugated bile acid hydrolase from Lactobacillus acidophilus.